A 307-amino-acid chain; its full sequence is UDP-N-acetylenolpyruvoylglucosamine reductase (307 aa).

The region spanning 29–197 (RVGGPAEWFA…LSARFRLDPG (169 aa)) is the FAD-binding PCMH-type domain. Arg-176 is a catalytic residue. The Proton donor role is filled by Ser-227. Residue Glu-297 is part of the active site.

It belongs to the MurB family. Requires FAD as cofactor.

It is found in the cytoplasm. It catalyses the reaction UDP-N-acetyl-alpha-D-muramate + NADP(+) = UDP-N-acetyl-3-O-(1-carboxyvinyl)-alpha-D-glucosamine + NADPH + H(+). The protein operates within cell wall biogenesis; peptidoglycan biosynthesis. Its function is as follows. Cell wall formation. In Prochlorococcus marinus (strain MIT 9313), this protein is UDP-N-acetylenolpyruvoylglucosamine reductase.